The chain runs to 131 residues: Photosystem II reaction center Psb28 protein (131 aa).

The tract at residues asparagine 110–alanine 131 is disordered. Residues leucine 112–alanine 125 are compositionally biased toward polar residues.

It belongs to the Psb28 family. As to quaternary structure, part of the photosystem II complex.

It is found in the cellular thylakoid membrane. The chain is Photosystem II reaction center Psb28 protein from Synechococcus sp. (strain CC9902).